The following is a 257-amino-acid chain: DNA repair protein RecO (257 aa).

The protein belongs to the RecO family.

In terms of biological role, involved in DNA repair and RecF pathway recombination. This chain is DNA repair protein RecO, found in Variovorax paradoxus (strain S110).